Reading from the N-terminus, the 63-residue chain is Cytochrome c oxidase subunit 7C, mitochondrial (63 aa).

The transit peptide at 1-16 (MWGQGVRRFTTSVVRR) directs the protein to the mitochondrion. Over 17–33 (SHYEEGPGKNLPFSVEN) the chain is Mitochondrial matrix. N6-acetyllysine; alternate is present on lysine 25. Lysine 25 is subject to N6-succinyllysine; alternate. Residues 34–60 (KWRLLAMMTLYLGSGFAAPFFIVRHQL) form a helical membrane-spanning segment. Over 61-63 (LKK) the chain is Mitochondrial intermembrane.

Belongs to the cytochrome c oxidase VIIc family. Component of the cytochrome c oxidase (complex IV, CIV), a multisubunit enzyme composed of 14 subunits. The complex is composed of a catalytic core of 3 subunits MT-CO1, MT-CO2 and MT-CO3, encoded in the mitochondrial DNA, and 11 supernumerary subunits COX4I, COX5A, COX5B, COX6A, COX6B, COX6C, COX7A, COX7B, COX7C, COX8 and NDUFA4, which are encoded in the nuclear genome. The complex exists as a monomer or a dimer and forms supercomplexes (SCs) in the inner mitochondrial membrane with NADH-ubiquinone oxidoreductase (complex I, CI) and ubiquinol-cytochrome c oxidoreductase (cytochrome b-c1 complex, complex III, CIII), resulting in different assemblies (supercomplex SCI(1)III(2)IV(1) and megacomplex MCI(2)III(2)IV(2)). Interacts with RAB5IF.

The protein resides in the mitochondrion inner membrane. It participates in energy metabolism; oxidative phosphorylation. Component of the cytochrome c oxidase, the last enzyme in the mitochondrial electron transport chain which drives oxidative phosphorylation. The respiratory chain contains 3 multisubunit complexes succinate dehydrogenase (complex II, CII), ubiquinol-cytochrome c oxidoreductase (cytochrome b-c1 complex, complex III, CIII) and cytochrome c oxidase (complex IV, CIV), that cooperate to transfer electrons derived from NADH and succinate to molecular oxygen, creating an electrochemical gradient over the inner membrane that drives transmembrane transport and the ATP synthase. Cytochrome c oxidase is the component of the respiratory chain that catalyzes the reduction of oxygen to water. Electrons originating from reduced cytochrome c in the intermembrane space (IMS) are transferred via the dinuclear copper A center (CU(A)) of subunit 2 and heme A of subunit 1 to the active site in subunit 1, a binuclear center (BNC) formed by heme A3 and copper B (CU(B)). The BNC reduces molecular oxygen to 2 water molecules using 4 electrons from cytochrome c in the IMS and 4 protons from the mitochondrial matrix. This Carlito syrichta (Philippine tarsier) protein is Cytochrome c oxidase subunit 7C, mitochondrial (COX7C).